We begin with the raw amino-acid sequence, 204 residues long: Large ribosomal subunit protein eL15 (204 aa).

The interval 161-180 (MRGLTSAGKKSRGLGKGHKF) is disordered. The segment covering 169-180 (KKSRGLGKGHKF) has biased composition (basic residues).

It belongs to the eukaryotic ribosomal protein eL15 family. As to quaternary structure, component of the large ribosomal subunit.

It localises to the cytoplasm. Functionally, component of the large ribosomal subunit. The ribosome is a large ribonucleoprotein complex responsible for the synthesis of proteins in the cell. The sequence is that of Large ribosomal subunit protein eL15 (rpl15) from Ictalurus punctatus (Channel catfish).